Here is a 98-residue protein sequence, read N- to C-terminus: Cytochrome c2 (98 aa).

Q1 bears the Pyrrolidone carboxylic acid mark. Heme c-binding residues include C10, C13, H14, and M76.

This sequence belongs to the cytochrome c family. Binds 1 heme c group covalently per subunit.

The protein resides in the periplasm. Cytochrome c2 is found mainly in purple, non-sulfur, photosynthetic bacteria where it functions as the electron donor to the oxidized bacteriochlorophyll in the photophosphorylation pathway. However, it may also have a role in the respiratory chain and is found in some non-photosynthetic bacteria. The polypeptide is Cytochrome c2 (Rhodoplanes tepidamans (Rhodoplanes cryptolactis)).